The chain runs to 272 residues: Exosome complex component MTR3 (272 aa).

The segment at 1–36 (MPGDHRRIRGPEESQPPQLYAADEEEAPGTRDPTRL) is disordered.

The protein belongs to the RNase PH family. As to quaternary structure, component of the RNA exosome core complex (Exo-9), composed of EXOSC1, EXOSC2, EXOSC3, EXOSC4, EXOSC5, EXOSC6, EXOSC7, EXOSC8 and EXOSC9; within the complex interacts with EXOSC1, EXOSC7 and EXOSC8. The catalytically inactive Exo-9 may associate with the catalytic subunit EXOSC10/RRP6. Exo-9 may associate with DIS3 to form the nucleolar exosome complex, or DIS3L to form the cytoplasmic exosome complex. Exo-9 is formed by a hexameric base ring consisting of the heterodimers EXOSC4-EXOSC9, EXOSC5-EXOSC8 and EXOSC6-EXOSC7, and a cap ring consisting of EXOSC1, EXOSC2 and EXOSC3. The RNA exosome complex associates with cofactors EXOSC10/RRP6, C1D/RRP47, MPHOSPH6/MPP6 and MTREX/MTR4.

Its subcellular location is the cytoplasm. The protein localises to the nucleus. The protein resides in the nucleolus. Functionally, non-catalytic component of the RNA exosome complex which has 3'-&gt;5' exoribonuclease activity and participates in a multitude of cellular RNA processing and degradation events. In the nucleus, the RNA exosome complex is involved in proper maturation of stable RNA species such as rRNA, snRNA and snoRNA, in the elimination of RNA processing by-products and non-coding 'pervasive' transcripts, such as antisense RNA species and promoter-upstream transcripts (PROMPTs), and of mRNAs with processing defects, thereby limiting or excluding their export to the cytoplasm. The RNA exosome may be involved in Ig class switch recombination (CSR) and/or Ig variable region somatic hypermutation (SHM) by targeting AICDA deamination activity to transcribed dsDNA substrates. In the cytoplasm, the RNA exosome complex is involved in general mRNA turnover and specifically degrades inherently unstable mRNAs containing AU-rich elements (AREs) within their 3' untranslated regions, and in RNA surveillance pathways, preventing translation of aberrant mRNAs. It seems to be involved in degradation of histone mRNA. The catalytic inactive RNA exosome core complex of 9 subunits (Exo-9) is proposed to play a pivotal role in the binding and presentation of RNA for ribonucleolysis, and to serve as a scaffold for the association with catalytic subunits and accessory proteins or complexes. The sequence is that of Exosome complex component MTR3 (EXOSC6) from Homo sapiens (Human).